The chain runs to 235 residues: Large ribosomal subunit protein uL1 (235 aa).

It belongs to the universal ribosomal protein uL1 family. As to quaternary structure, part of the 50S ribosomal subunit.

Its function is as follows. Binds directly to 23S rRNA. The L1 stalk is quite mobile in the ribosome, and is involved in E site tRNA release. Functionally, protein L1 is also a translational repressor protein, it controls the translation of the L11 operon by binding to its mRNA. The polypeptide is Large ribosomal subunit protein uL1 (Mycolicibacterium smegmatis (strain ATCC 700084 / mc(2)155) (Mycobacterium smegmatis)).